Reading from the N-terminus, the 290-residue chain is 4-hydroxybenzoate octaprenyltransferase (290 aa).

The next 6 membrane-spanning stretches (helical) occupy residues 33-53, 99-119, 141-161, 213-233, 234-254, and 268-288; these read LWAL…AVFV, LFVI…VKTI, LPQV…FCAV, LIIG…GWLN, GLGA…IWQQ, and AFLN…LSYL.

It belongs to the UbiA prenyltransferase family. The cofactor is Mg(2+).

It is found in the cell inner membrane. It carries out the reaction all-trans-octaprenyl diphosphate + 4-hydroxybenzoate = 4-hydroxy-3-(all-trans-octaprenyl)benzoate + diphosphate. The protein operates within cofactor biosynthesis; ubiquinone biosynthesis. Catalyzes the prenylation of para-hydroxybenzoate (PHB) with an all-trans polyprenyl group. Mediates the second step in the final reaction sequence of ubiquinone-8 (UQ-8) biosynthesis, which is the condensation of the polyisoprenoid side chain with PHB, generating the first membrane-bound Q intermediate 3-octaprenyl-4-hydroxybenzoate. The protein is 4-hydroxybenzoate octaprenyltransferase of Cronobacter sakazakii (strain ATCC BAA-894) (Enterobacter sakazakii).